Consider the following 1511-residue polypeptide: DNA-directed RNA polymerase subunit beta' (1511 aa).

C75, C77, C90, and C93 together coordinate Zn(2+). Mg(2+) contacts are provided by D474, D476, and D478. Positions 804, 878, 885, and 888 each coordinate Zn(2+).

The protein belongs to the RNA polymerase beta' chain family. In terms of assembly, the RNAP catalytic core consists of 2 alpha, 1 beta, 1 beta' and 1 omega subunit. When a sigma factor is associated with the core the holoenzyme is formed, which can initiate transcription. The cofactor is Mg(2+). It depends on Zn(2+) as a cofactor.

It carries out the reaction RNA(n) + a ribonucleoside 5'-triphosphate = RNA(n+1) + diphosphate. DNA-dependent RNA polymerase catalyzes the transcription of DNA into RNA using the four ribonucleoside triphosphates as substrates. This is DNA-directed RNA polymerase subunit beta' from Aliarcobacter butzleri (strain RM4018) (Arcobacter butzleri).